A 361-amino-acid polypeptide reads, in one-letter code: Protein YIM1-2 (361 aa).

It belongs to the YIM1 family.

Its subcellular location is the lipid droplet. It localises to the mitochondrion. In Lachancea thermotolerans (strain ATCC 56472 / CBS 6340 / NRRL Y-8284) (Yeast), this protein is Protein YIM1-2 (YIM1-2).